A 158-amino-acid polypeptide reads, in one-letter code: Transcription factor BTF3 homolog 4 (158 aa).

The NAC-A/B domain maps to 33 to 98; sequence TADDKKLQSS…AETKQLTEML (66 aa). Residues 125 to 158 are disordered; that stretch reads LDNKAPKAEDIDEEDDDVPDLVENFDEASKNEAN. A compositionally biased stretch (acidic residues) spans 134 to 150; sequence DIDEEDDDVPDLVENFD.

The protein belongs to the NAC-beta family.

The sequence is that of Transcription factor BTF3 homolog 4 (btf3l4) from Danio rerio (Zebrafish).